A 418-amino-acid chain; its full sequence is F420-non-reducing hydrogenase vhu subunit A (418 aa).

Residues Cys-61 and Cys-64 each coordinate Ni(2+).

This sequence belongs to the [NiFe]/[NiFeSe] hydrogenase large subunit family. In terms of assembly, the F420-non-reducing hydrogenase vhu is composed of four subunits; VhuA, VhuD, VhuG and VhuU. Ni(2+) is required as a cofactor.

In Methanocaldococcus jannaschii (strain ATCC 43067 / DSM 2661 / JAL-1 / JCM 10045 / NBRC 100440) (Methanococcus jannaschii), this protein is F420-non-reducing hydrogenase vhu subunit A (vhuA).